The primary structure comprises 127 residues: MQNKKIAHIVRIEMFEEKIDRLDLIFTKYVEYKFPLYLLGKLWLYKFIRRKFNLIGPLNEQILSPYLQFNLYFDKSKARKETFKVYLGKIGFVLLHVFYLSCIAYYDSFLYAKVMNDWLEEVMRTRY.

Residues 85–107 traverse the membrane as a helical segment; that stretch reads VYLGKIGFVLLHVFYLSCIAYYD.

It localises to the mitochondrion membrane. This is an uncharacterized protein from Dictyostelium discoideum (Social amoeba).